Reading from the N-terminus, the 119-residue chain is Large ribosomal subunit protein uL24 (119 aa).

It belongs to the universal ribosomal protein uL24 family. In terms of assembly, part of the 50S ribosomal subunit.

Its function is as follows. One of two assembly initiator proteins, it binds directly to the 5'-end of the 23S rRNA, where it nucleates assembly of the 50S subunit. One of the proteins that surrounds the polypeptide exit tunnel on the outside of the subunit. This Clavibacter michiganensis subsp. michiganensis (strain NCPPB 382) protein is Large ribosomal subunit protein uL24.